The sequence spans 47 residues: Sperm protamine P1 (47 aa).

The protein belongs to the protamine P1 family. Testis.

Its subcellular location is the nucleus. The protein localises to the chromosome. Functionally, protamines substitute for histones in the chromatin of sperm during the haploid phase of spermatogenesis. They compact sperm DNA into a highly condensed, stable and inactive complex. The sequence is that of Sperm protamine P1 (PRM1) from Orcinus orca (Killer whale).